The following is an 86-amino-acid chain: Defensin-like protein a (86 aa).

Positions 1-23 (MRCSVLFVVSYVIMSLLISHVQG) are cleaved as a signal peptide. Cystine bridges form between cysteine 33–cysteine 81, cysteine 43–cysteine 67, cysteine 51–cysteine 76, and cysteine 65–cysteine 78.

This sequence belongs to the DEFL family. As to expression, expressed specifically in anthers.

It localises to the secreted. Involved in self-incompatibility. The protein is Defensin-like protein a (SCRa) of Arabidopsis lyrata (Lyre-leaved rock-cress).